Consider the following 568-residue polypeptide: Sphingosine-1-phosphate lyase 1 (568 aa).

The Lumenal portion of the chain corresponds to 1–41 (MPSTDLLTLKAFEPYLEILEVYSTKAKNYVNGHCTKYEPWQ). The chain crosses the membrane as a helical; Signal-anchor for type III membrane protein span at residues 42-62 (LIAWSVVWTLLIVWGYEFVFQ). The Cytoplasmic segment spans residues 63 to 568 (PESLWSRFKK…SQMNGSPKPH (506 aa)). An N6-(pyridoxal phosphate)lysine; alternate modification is found at Lys-353. N6-acetyllysine; alternate is present on Lys-353. Tyr-356 and Tyr-366 each carry 3'-nitrotyrosine. Position 564 is a phosphoserine (Ser-564).

This sequence belongs to the group II decarboxylase family. Sphingosine-1-phosphate lyase subfamily. In terms of assembly, homodimer. The cofactor is pyridoxal 5'-phosphate.

It localises to the endoplasmic reticulum membrane. The catalysed reaction is sphinganine 1-phosphate = hexadecanal + phosphoethanolamine. The enzyme catalyses sphing-4-enine 1-phosphate = (2E)-hexadecenal + phosphoethanolamine. The protein operates within lipid metabolism; sphingolipid metabolism. Cleaves phosphorylated sphingoid bases (PSBs), such as sphingosine-1-phosphate, into fatty aldehydes and phosphoethanolamine. Elevates stress-induced ceramide production and apoptosis. Required for global lipid homeostasis in liver and cholesterol homeostasis in fibroblasts. Involved in the regulation of pro-inflammatory response and neutrophil trafficking. Modulates neuronal autophagy via phosphoethanolamine production which regulates accumulation of aggregate-prone proteins such as APP. Seems to play a role in establishing neuronal contact sites and axonal maintenance. The chain is Sphingosine-1-phosphate lyase 1 from Pongo abelii (Sumatran orangutan).